The sequence spans 135 residues: Large ribosomal subunit protein eL32 (135 aa).

The protein belongs to the eukaryotic ribosomal protein eL32 family. As to quaternary structure, component of the large ribosomal subunit.

Its subcellular location is the cytoplasm. In terms of biological role, component of the large ribosomal subunit. The ribosome is a large ribonucleoprotein complex responsible for the synthesis of proteins in the cell. The chain is Large ribosomal subunit protein eL32 (rpl32) from Ictalurus punctatus (Channel catfish).